We begin with the raw amino-acid sequence, 453 residues long: Carbamoyl phosphate synthase arginine-specific small chain (453 aa).

Residues 1 to 33 constitute a mitochondrion transit peptide; sequence MFSRLAARLPKASALNGVAARQVRNLSQPAITG. The interval 26–50 is disordered; that stretch reads LSQPAITGSKGRNMPAREPRTTAAA. Residues Ser-97, Gly-280, and Gly-282 each coordinate L-glutamine. One can recognise a Glutamine amidotransferase type-1 domain in the interval 233–420; it reads HVALIDCGVK…MENVELFKSN (188 aa). Cys-309 acts as the Nucleophile in catalysis. L-glutamine contacts are provided by Leu-310, Gln-313, Asn-351, Gly-353, and Tyr-354. Residues His-393 and Glu-395 contribute to the active site.

Belongs to the CarA family. Heterodimer composed of 2 chains; the small (or glutamine) chain promotes the hydrolysis of glutamine to ammonia, which is used by the large (or ammonia) chain to synthesize carbamoyl phosphate.

It is found in the mitochondrion matrix. The enzyme catalyses hydrogencarbonate + L-glutamine + 2 ATP + H2O = carbamoyl phosphate + L-glutamate + 2 ADP + phosphate + 2 H(+). It catalyses the reaction L-glutamine + H2O = L-glutamate + NH4(+). The protein operates within amino-acid biosynthesis; L-arginine biosynthesis; carbamoyl phosphate from bicarbonate: step 1/1. Functionally, small subunit of the arginine-specific carbamoyl phosphate synthase (CPSase). CPSase catalyzes the formation of carbamoyl phosphate from the ammonia moiety of glutamine, carbonate, and phosphate donated by ATP, the first step of the arginine biosynthetic pathway. The small subunit (glutamine amidotransferase) binds and cleaves glutamine to supply the large subunit with the substrate ammonia. This Neurospora crassa (strain ATCC 24698 / 74-OR23-1A / CBS 708.71 / DSM 1257 / FGSC 987) protein is Carbamoyl phosphate synthase arginine-specific small chain (arg-2).